Reading from the N-terminus, the 527-residue chain is MAGGQLNVLSTLDQAKTQWYHFMAIVIAGMGFFTDAYDLFCISLVTKLLGRIYYTDDSKDTPGALPPNVSAAVTGVALCGTLAGQLFFGWLGDKLGRKSVYGFTLILMVVCSVASGLSFGSSAKGVVSTLCFFRFWLGFGIGGDYPLSATIMSEYANKRTRGAFIAAVFAMQGFGILFGAIVALAVSAGFRHAYPAPSYSDNHAASLVPQADYVWRIILMFGTVPAALTYYWRMKMPETARYTALIARNAKQAAADMSKVLHTQIEESADRAETVAVGGESWGLFSRQFLRRHGLHLLATTSTWFLLDIAFYSQNLFQKDIFSKVGWIPPAKTMNALEELYRIARAQALIALCGTIPGYWFTVAFIEIMGRFWIQIMGFAMMTAFMLGLAIPYHHWTTPGHHTGFIVMYGFTFFFANFGPNSTTFIVPAEIYPARLRSTCHGISAAAGKAGAIIGAFGFLYAAQDQHKPEPGYPRGIGIKNALFVLAGTNFLGTIMTLLVPESKGMSLEVISQEVADGDDEEAAYPK.

At 1 to 21 the chain is on the cytoplasmic side; it reads MAGGQLNVLSTLDQAKTQWYH. The helical transmembrane segment at 22–42 threads the bilayer; the sequence is FMAIVIAGMGFFTDAYDLFCI. At 43-70 the chain is on the extracellular side; the sequence is SLVTKLLGRIYYTDDSKDTPGALPPNVS. The helical transmembrane segment at 71 to 91 threads the bilayer; it reads AAVTGVALCGTLAGQLFFGWL. Over 92–99 the chain is Cytoplasmic; that stretch reads GDKLGRKS. A helical transmembrane segment spans residues 100 to 120; sequence VYGFTLILMVVCSVASGLSFG. Topologically, residues 121 to 124 are extracellular; sequence SSAK. The chain crosses the membrane as a helical span at residues 125 to 145; that stretch reads GVVSTLCFFRFWLGFGIGGDY. Residues 146-163 are Cytoplasmic-facing; that stretch reads PLSATIMSEYANKRTRGA. A helical transmembrane segment spans residues 164 to 184; it reads FIAAVFAMQGFGILFGAIVAL. At 185 to 211 the chain is on the extracellular side; it reads AVSAGFRHAYPAPSYSDNHAASLVPQA. Residues 212-232 traverse the membrane as a helical segment; it reads DYVWRIILMFGTVPAALTYYW. The Cytoplasmic segment spans residues 233-292; it reads RMKMPETARYTALIARNAKQAAADMSKVLHTQIEESADRAETVAVGGESWGLFSRQFLRR. Residues 293-313 traverse the membrane as a helical segment; that stretch reads HGLHLLATTSTWFLLDIAFYS. The Extracellular segment spans residues 314–348; that stretch reads QNLFQKDIFSKVGWIPPAKTMNALEELYRIARAQA. Residues 349 to 369 form a helical membrane-spanning segment; it reads LIALCGTIPGYWFTVAFIEIM. Topologically, residues 370-371 are cytoplasmic; sequence GR. Residues 372-392 traverse the membrane as a helical segment; that stretch reads FWIQIMGFAMMTAFMLGLAIP. Residues 393–405 are Extracellular-facing; sequence YHHWTTPGHHTGF. Residues 406–426 form a helical membrane-spanning segment; it reads IVMYGFTFFFANFGPNSTTFI. Over 427 to 442 the chain is Cytoplasmic; that stretch reads VPAEIYPARLRSTCHG. Residues 443-463 traverse the membrane as a helical segment; the sequence is ISAAAGKAGAIIGAFGFLYAA. At 464-481 the chain is on the extracellular side; sequence QDQHKPEPGYPRGIGIKN. A helical membrane pass occupies residues 482 to 502; it reads ALFVLAGTNFLGTIMTLLVPE. Residues 503 to 527 are Cytoplasmic-facing; the sequence is SKGMSLEVISQEVADGDDEEAAYPK.

It belongs to the major facilitator superfamily. Phosphate:H(+) symporter (TC 2.A.1.9) family. As to expression, expressed in roots, stems and leaves.

It is found in the membrane. In terms of biological role, high-affinity transporter for external inorganic phosphate. Required for phosphate acquisition in plant. The sequence is that of Inorganic phosphate transporter 1-1 (PHT1-1) from Oryza sativa subsp. japonica (Rice).